A 174-amino-acid chain; its full sequence is uncharacterized protein (174 aa).

An N-terminal signal peptide occupies residues 1-31 (MCCVYRMNRPASGLTVVFCGKLSGKPGPKSA). The segment at 39–59 (KSGADDGGENPRFFSAGPRTE) is disordered.

This is an uncharacterized protein from Escherichia coli (strain K12).